The chain runs to 349 residues: Terpene cyclase janA (349 aa).

A glycan (N-linked (GlcNAc...) asparagine) is linked at Asn-80. 6 consecutive transmembrane segments (helical) span residues 81–101 (LSLYGVAFASALVPMWLVIVL), 116–136 (LAFLAGPLVQCLGPGLVIPAI), 155–175 (IGFYPSSMIIGYILPLILAAL), 189–209 (LIAVWQGWPVYTSLIMLIIHY), 223–243 (IACAFAFACSTAGHLAFLWFA), and 308–328 (VILIFGMAGVVFLGPCSVALL).

The protein belongs to the membrane-bound ascI terpene cyclase family.

The protein resides in the membrane. It participates in secondary metabolite biosynthesis. Its function is as follows. Part of the gene cluster that mediates the biosynthesis of the indole diterpenes janthitremanes such as shearinine K or shearinine A. The geranylgeranyl diphosphate (GGPP) synthase janG catalyzes the first step in janthitremane biosynthesis via conversion of farnesyl pyrophosphate and isopentyl pyrophosphate into geranylgeranyl pyrophosphate (GGPP). Condensation of indole-3-glycerol phosphate with GGPP by the prenyl transferase janC then forms 3-geranylgeranylindole (3-GGI). Epoxidation by the FAD-dependent monooxygenase janM leads to a epoxidized-GGI that is substrate of the terpene cyclase janB for cyclization to yield paspaline. Paspaline is subsequently converted to 13-desoxypaspaline by the cytochrome P450 monooxygenase janP, via beta-PC-M6 in a series of alpha-face oxidations. The cytochrome P450 monooxygenase janQ is proposed to carry out sequential beta-face oxidation steps at C-7 and C-13 of 13-desoxypaspaline to form paspalicine and paspalinine respectively. The indole diterpene prenyltransferase janD may then convert paspalinine into shearinine K which is substrate of janO and/or additional enzymes for oxidation and cyclization to generate shearinine A. The protein is Terpene cyclase janA of Penicillium janthinellum (Penicillium vitale).